The chain runs to 144 residues: Small ribosomal subunit protein uS19 (144 aa).

It belongs to the universal ribosomal protein uS19 family.

Its function is as follows. Protein S19 forms a complex with S13 that binds strongly to the 16S ribosomal RNA. This chain is Small ribosomal subunit protein uS19, found in Hyperthermus butylicus (strain DSM 5456 / JCM 9403 / PLM1-5).